The sequence spans 154 residues: Pseudo histidine-containing phosphotransfer protein 6 (154 aa).

The residue at position 1 (Met-1) is an N-acetylmethionine. Residues 41–137 (SPNFVYDVIN…HYLKNMMHEL (97 aa)) form the HPt domain.

As to quaternary structure, interacts with AHK5.

Its subcellular location is the cytoplasm. It is found in the cytosol. The protein resides in the nucleus. In terms of biological role, functions as a two-component phosphorelay mediator between cytokinin sensor histidine kinases and response regulators (B-type ARRs). Plays an important role in propagating cytokinin signal transduction. In Arabidopsis thaliana (Mouse-ear cress), this protein is Pseudo histidine-containing phosphotransfer protein 6 (AHP6).